The sequence spans 288 residues: AA9 family lytic polysaccharide monooxygenase A (288 aa).

An N-terminal signal peptide occupies residues 1 to 22 (MKSTSATKFSVLAAATFAAAHG). Cu(2+)-binding residues include His21 and His104. 2 disulfides stabilise this stretch: Cys74/Cys191 and Cys115/Cys119. N-linked (GlcNAc...) asparagine glycosylation is present at Asn151. O2 contacts are provided by His177 and Gln186. Tyr188 serves as a coordination point for Cu(2+). The tract at residues 236–270 (PEPYKSGSGSSDNAAEAVSSAAAEEPAAAATSAAA) is disordered. Residues 249–270 (AAEAVSSAAAEEPAAAATSAAA) are compositionally biased toward low complexity.

Belongs to the polysaccharide monooxygenase AA9 family. Requires Cu(2+) as cofactor.

It localises to the secreted. It catalyses the reaction [(1-&gt;4)-beta-D-glucosyl]n+m + reduced acceptor + O2 = 4-dehydro-beta-D-glucosyl-[(1-&gt;4)-beta-D-glucosyl]n-1 + [(1-&gt;4)-beta-D-glucosyl]m + acceptor + H2O.. Lytic polysaccharide monooxygenase (LPMO) that depolymerizes crystalline and amorphous polysaccharides via the oxidation of scissile alpha- or beta-(1-4)-glycosidic bonds, yielding C1 and C4 oxidation products. Catalysis by LPMOs requires the reduction of the active-site copper from Cu(II) to Cu(I) by a reducing agent and H(2)O(2) or O(2) as a cosubstrate. Active on cellulose and on xyloglucan for deconstruction of plant biomass. This chain is AA9 family lytic polysaccharide monooxygenase A, found in Geotrichum candidum (Oospora lactis).